We begin with the raw amino-acid sequence, 1078 residues long: Transmembrane protein 132B (1078 aa).

The Extracellular segment spans residues 1–903 (MFGAASRMDT…LTDLEIGMYA (903 aa)). N-linked (GlcNAc...) asparagine glycans are attached at residues Asn-343, Asn-366, and Asn-381. Residues 834–887 (RGTPVGQEESTNKSTTPQSPMEGKNKLLKSGGPDAFTSFPTQGKSPDPNNPSDL) are disordered. Over residues 841–852 (EESTNKSTTPQS) the composition is skewed to polar residues. A helical membrane pass occupies residues 904–924 (LLCVFCLAILVFLINCVAFAW). The Cytoplasmic portion of the chain corresponds to 925 to 1078 (KYRHKRFAVS…DYMESLQDQM (154 aa)).

Belongs to the TMEM132 family.

It is found in the membrane. This chain is Transmembrane protein 132B (TMEM132B), found in Homo sapiens (Human).